A 685-amino-acid polypeptide reads, in one-letter code: DNA ligase (685 aa).

NAD(+) is bound by residues 47–51 (DSEYD), 96–97 (SL), and Glu-125. The N6-AMP-lysine intermediate role is filled by Lys-127. Residues Arg-148, Glu-185, Lys-304, and Lys-328 each contribute to the NAD(+) site. 4 residues coordinate Zn(2+): Cys-422, Cys-425, Cys-440, and Cys-446. The 81-residue stretch at 605 to 685 (ADAQPLKGQT…ELLALLAANA (81 aa)) folds into the BRCT domain.

It belongs to the NAD-dependent DNA ligase family. LigA subfamily. Mg(2+) serves as cofactor. Requires Mn(2+) as cofactor.

It carries out the reaction NAD(+) + (deoxyribonucleotide)n-3'-hydroxyl + 5'-phospho-(deoxyribonucleotide)m = (deoxyribonucleotide)n+m + AMP + beta-nicotinamide D-nucleotide.. Functionally, DNA ligase that catalyzes the formation of phosphodiester linkages between 5'-phosphoryl and 3'-hydroxyl groups in double-stranded DNA using NAD as a coenzyme and as the energy source for the reaction. It is essential for DNA replication and repair of damaged DNA. The chain is DNA ligase from Shewanella baltica (strain OS195).